We begin with the raw amino-acid sequence, 58 residues long: uncharacterized protein (58 aa).

Low complexity predominate over residues 23-51 (TTTSTSTTTTSTTTSTTTSTTTTTTTTTT). The tract at residues 23–58 (TTTSTSTTTTSTTTSTTTSTTTTTTTTTTKDFNTET) is disordered.

This is an uncharacterized protein from Dictyostelium discoideum (Social amoeba).